The following is a 524-amino-acid chain: MDRPPMVCLVVLDGWAIGPDYPGNAIRAAHTPVMDRLQATYPMTTLRCWGRDVGLPDDQMGNSEVGHLNLGAGRIVYQLITRIDLAIEDGSFFQNEAFQRALDRARQPGRTLHLMGLIGDGGVHSHQRHLLALLELAARAGISRVAVHAFTDGRDTAPTSGIEHLRELLAALDRLRTGFVATVSGRYYAMDRDKRWERTKLAYDAIVCGLGQTARSPLEAIERSYAQGITDEFIVPTVIVDAEGKPLATINDGDAVIFFNFRADRARQLTQALTDAGGFTAFPRCRWPRDLLMVTMAEYEPHFPVLVAFAPDIVRVPLARVLSDVGLRQFHTAETEKYAHVTYFFNGGREEPFPGEDRLLVPSPKVPTYDLKPEMSAPEVTDAAVQAIVSQRYAFVLVNYANPDMVGHTGVFAAAVAAVECVDRCLGRIEQAVRSVNGYLVVTADHGNADEMLVPGTNEVWTAHTKNPVPFILVAPNHSPFRSVALRTGGRLADVAPTILEIMGLPQPEEMTGRSLIVAPSVGR.

Mn(2+)-binding residues include D13 and S63. S63 functions as the Phosphoserine intermediate in the catalytic mechanism. Substrate-binding positions include H124, 154–155 (RD), R186, R192, 262–265 (RADR), and K337. D404, H408, D445, H446, and H464 together coordinate Mn(2+).

Belongs to the BPG-independent phosphoglycerate mutase family. Monomer. Mn(2+) serves as cofactor.

The enzyme catalyses (2R)-2-phosphoglycerate = (2R)-3-phosphoglycerate. The protein operates within carbohydrate degradation; glycolysis; pyruvate from D-glyceraldehyde 3-phosphate: step 3/5. Its function is as follows. Catalyzes the interconversion of 2-phosphoglycerate and 3-phosphoglycerate. The chain is 2,3-bisphosphoglycerate-independent phosphoglycerate mutase from Thermomicrobium roseum (strain ATCC 27502 / DSM 5159 / P-2).